Reading from the N-terminus, the 1013-residue chain is GTPase-activating protein BEM3 (1013 aa).

Disordered stretches follow at residues 90–197, 258–277, 282–301, and 307–421; these read TVVE…GSPA, GSRYDTERAGGPGPLSPESI, SDLQEHQPSDLSSTTRTDLG, and VDTT…HQSK. A compositionally biased stretch (polar residues) spans 143 to 160; sequence QEATSGAQQVPLLTSSKS. Composition is skewed to polar residues over residues 309-319, 333-388, and 404-418; these read TTFNAEDNPTG, TLQN…TSSN, and KSYSQHSGSPHSNSH. The region spanning 555-662 is the PH domain; that stretch reads EFAKEGMLLV…WISVLTTLCD (108 aa). The disordered stretch occupies residues 702-726; that stretch reads AMDATSPTRPNDPNPVSLTSEEEKE. Polar residues predominate over residues 706–720; it reads TSPTRPNDPNPVSLT. One can recognise a Rho-GAP domain in the interval 799-1013; it reads LQLSSHPYQG…PPVNIHIPQI (215 aa).

Its subcellular location is the cytoplasm. Functionally, GTPase-activating protein (GAP) for CDC42 and less efficiently for RHO1. Negative regulator of the pheromone-response pathway through the STE20 protein kinase. In Eremothecium gossypii (strain ATCC 10895 / CBS 109.51 / FGSC 9923 / NRRL Y-1056) (Yeast), this protein is GTPase-activating protein BEM3 (BEM3).